Here is a 525-residue protein sequence, read N- to C-terminus: GMP synthase [glutamine-hydrolyzing] (525 aa).

Positions 8-207 constitute a Glutamine amidotransferase type-1 domain; it reads KILILDFGSQ…ALDICQCDAN (200 aa). The active-site Nucleophile is cysteine 85. Active-site residues include histidine 181 and glutamate 183. One can recognise a GMPS ATP-PPase domain in the interval 208-400; it reads WKPASIIEDA…LGLPYDMLYR (193 aa). ATP is bound at residue 235-241; sequence SGGVDSS.

As to quaternary structure, homodimer.

It carries out the reaction XMP + L-glutamine + ATP + H2O = GMP + L-glutamate + AMP + diphosphate + 2 H(+). It participates in purine metabolism; GMP biosynthesis; GMP from XMP (L-Gln route): step 1/1. Functionally, catalyzes the synthesis of GMP from XMP. The protein is GMP synthase [glutamine-hydrolyzing] of Shewanella woodyi (strain ATCC 51908 / MS32).